The primary structure comprises 129 residues: Small ribosomal subunit protein uS11 (129 aa).

Belongs to the universal ribosomal protein uS11 family. As to quaternary structure, part of the 30S ribosomal subunit. Interacts with proteins S7 and S18. Binds to IF-3.

Its function is as follows. Located on the platform of the 30S subunit, it bridges several disparate RNA helices of the 16S rRNA. Forms part of the Shine-Dalgarno cleft in the 70S ribosome. The chain is Small ribosomal subunit protein uS11 from Staphylococcus saprophyticus subsp. saprophyticus (strain ATCC 15305 / DSM 20229 / NCIMB 8711 / NCTC 7292 / S-41).